Consider the following 233-residue polypeptide: 7-cyano-7-deazaguanine synthase (233 aa).

11–21 (FSGGQDSTTCL) lines the ATP pocket. C199, C214, C217, and C220 together coordinate Zn(2+).

It belongs to the QueC family. It depends on Zn(2+) as a cofactor.

It carries out the reaction 7-carboxy-7-deazaguanine + NH4(+) + ATP = 7-cyano-7-deazaguanine + ADP + phosphate + H2O + H(+). It participates in purine metabolism; 7-cyano-7-deazaguanine biosynthesis. Its function is as follows. Catalyzes the ATP-dependent conversion of 7-carboxy-7-deazaguanine (CDG) to 7-cyano-7-deazaguanine (preQ(0)). The chain is 7-cyano-7-deazaguanine synthase from Herminiimonas arsenicoxydans.